The chain runs to 251 residues: Flagellar brake protein YcgR (251 aa).

Positions 127–239 constitute a PilZ domain; it reads QRRDGFRVRP…ASRTLQRYID (113 aa).

The protein belongs to the YcgR family. As to quaternary structure, monomer. Interacts with the flagellar basal bodies.

It localises to the bacterial flagellum basal body. Its function is as follows. Acts as a flagellar brake, regulating swimming and swarming in a bis-(3'-5') cyclic diguanylic acid (c-di-GMP)-dependent manner. Binds 1 c-di-GMP dimer per subunit. Increasing levels of c-di-GMP lead to decreased motility. This Leptothrix cholodnii (strain ATCC 51168 / LMG 8142 / SP-6) (Leptothrix discophora (strain SP-6)) protein is Flagellar brake protein YcgR.